A 788-amino-acid chain; its full sequence is MDSSEGCTDMDEPSPGFILNMTSDAKVRSVVEQIDRLSNITTSPPEMGWYDLEFDPLEDEGPFLPFSAYVITGTAGAGKSTSVSALHQNLNCLITGATVVAAQNLSRALKSYCPTIYHAFGFKSRHINICQRKVPKVTQSSIEQLQRYELARYWPTVTDIIREFMRKKQKGQYSSLSQSAFRLLCRMGGANLWTSNIIVIDEAGTLSSHILTAVVFFYWFYNSWLDTPLYRNGAVPCIVCVGSPTQTDAFQSVFNHTQQRNEISACDNVLTFLLGKREVADYIRLDENWALFINNKRCTDPQFGHLLKTLEYNLDISPELMDYIDRFVVPKSKILDPLEYAGWTRLFISHQEVKSFLATLHTCLSSNKDAVSTKLFTCPVVCEVFTEPFEEYKRAVGLTHMTPIEWVTKNLFRLSNYSQFADQDMAVVGTYITDASTQITFATKFVKNSYATLTGKTKKCICGFHGSYQRFKSILDGELFIESHSHDNPAYVYSFLSTLLYNAMYSFYAHGVKQGHEEFLRDLRELPVSQELISEMSSEDVLGQEGDTDAFYLTASLPPSPTHAALPTLVAYYSGAKELFCNRLALARRHFGDEFLHSDFSTFTVNIVVRDGVDFVSTSPGLHGLVAYASTIDTYIIQGYTFLPVRFGRPGGQRLSEDLRRKMPSIVVQDSSGFIACLENNVTKMTETLEGGDVFNICCAGDYGISSNLAMTIVKAQGVSLSRVAISFGNHRNIRASLVYVGVSRAIDARYLVMDSNPLKLMDRGDAQSPSSKYIIKALCNPKTTLIY.

ATP is bound at residue Gly-73 to Ser-80.

This sequence belongs to the herpesviridae helicase family. In terms of assembly, associates with the primase and the primase-associated factor to form the helicase-primase complex.

Its subcellular location is the host nucleus. In terms of biological role, component of the helicase/primase complex. Unwinds the DNA at the replication forks and generates single-stranded DNA for both leading and lagging strand synthesis. The primase synthesizes short RNA primers on the lagging strand that the polymerase elongates using dNTPs. Possesses helicase-like motifs and therefore may act as the helicase subunit of the complex. The sequence is that of DNA replication helicase from Homo sapiens (Human).